A 200-amino-acid polypeptide reads, in one-letter code: Protein GrpE (200 aa).

The segment covering 1 to 25 has biased composition (basic and acidic residues); that stretch reads MMSKQNKKDWKKFKDEHKEEHKVEN. Positions 1–52 are disordered; sequence MMSKQNKKDWKKFKDEHKEEHKVENEILEEETDEESQHQEPALGHPSYTALE.

This sequence belongs to the GrpE family. In terms of assembly, homodimer.

Its subcellular location is the cytoplasm. Participates actively in the response to hyperosmotic and heat shock by preventing the aggregation of stress-denatured proteins, in association with DnaK and GrpE. It is the nucleotide exchange factor for DnaK and may function as a thermosensor. Unfolded proteins bind initially to DnaJ; upon interaction with the DnaJ-bound protein, DnaK hydrolyzes its bound ATP, resulting in the formation of a stable complex. GrpE releases ADP from DnaK; ATP binding to DnaK triggers the release of the substrate protein, thus completing the reaction cycle. Several rounds of ATP-dependent interactions between DnaJ, DnaK and GrpE are required for fully efficient folding. This Legionella pneumophila subsp. pneumophila (strain Philadelphia 1 / ATCC 33152 / DSM 7513) protein is Protein GrpE.